We begin with the raw amino-acid sequence, 380 residues long: Probable inactive dehydrogenase easA (380 aa).

FMN-binding positions include 25–27 (PMT), alanine 60, glutamine 102, and histidine 171. Substrate contacts are provided by histidine 171 and asparagine 174. FMN-binding positions include lysine 223, glycine 299, 324–325 (GR), and arginine 325. Tyrosine 352 lines the substrate pocket.

Belongs to the NADH:flavin oxidoreductase/NADH oxidase family.

In terms of biological role, probable inactive dehydrogenase; part of the gene cluster that mediates the biosynthesis of fungal ergot alkaloid. DmaW catalyzes the first step of ergot alkaloid biosynthesis by condensing dimethylallyl diphosphate (DMAP) and tryptophan to form 4-dimethylallyl-L-tryptophan. The second step is catalyzed by the methyltransferase easF that methylates 4-dimethylallyl-L-tryptophan in the presence of S-adenosyl-L-methionine, resulting in the formation of 4-dimethylallyl-L-abrine. The catalase easC and the FAD-dependent oxidoreductase easE then transform 4-dimethylallyl-L-abrine to chanoclavine-I which is further oxidized by easD in the presence of NAD(+), resulting in the formation of chanoclavine-I aldehyde. Agroclavine dehydrogenase easG then mediates the conversion of chanoclavine-I aldehyde to agroclavine via a non-enzymatic adduct reaction: the substrate is an iminium intermediate that is formed spontaneously from chanoclavine-I aldehyde in the presence of glutathione. The presence of easA is not required to complete this reaction. Further conversion of agroclavine to paspalic acid is a two-step process involving oxidation of agroclavine to elymoclavine and of elymoclavine to paspalic acid, the second step being performed by the elymoclavine oxidase cloA. Paspalic acid is then further converted to D-lysergic acid. Ergopeptines are assembled from D-lysergic acid and three different amino acids by the D-lysergyl-peptide-synthetases composed each of a monomudular and a trimodular nonribosomal peptide synthetase subunit. LpsB and lpsC encode the monomodular subunits responsible for D-lysergic acid activation and incorporation into the ergopeptine backbone. LpsA1 and A2 subunits encode the trimodular nonribosomal peptide synthetase assembling the tripeptide portion of ergopeptines. LpsA1 is responsible for formation of the major ergopeptine, ergotamine, and lpsA2 for alpha-ergocryptine, the minor ergopeptine of the total alkaloid mixture elaborated by C.purpurea. D-lysergyl-tripeptides are assembled by the nonribosomal peptide synthetases and released as N-(D-lysergyl-aminoacyl)-lactams. Cyclolization of the D-lysergyl-tripeptides is performed by the Fe(2+)/2-ketoglutarate-dependent dioxygenase easH which introduces a hydroxyl group into N-(D-lysergyl-aminoacyl)-lactam at alpha-C of the aminoacyl residue followed by spontaneous condensation with the terminal lactam carbonyl group. The chain is Probable inactive dehydrogenase easA from Claviceps purpurea (strain 20.1) (Ergot fungus).